The sequence spans 124 residues: MKQYKVSAIEVDEEASTVELEEEIDAQLAARLKPGKRVLVDSDQYAFIYILEDEEAFYAIRFEKNVWPALNEAHKLKTSYYVKLNEHTRLALVDMEEELVFLLENIRGNGNYGEAFEQAVNDAF.

Belongs to the UPF0738 family.

The sequence is that of UPF0738 protein ABC2521 from Shouchella clausii (strain KSM-K16) (Alkalihalobacillus clausii).